Consider the following 1226-residue polypeptide: Double-stranded RNA-specific adenosine deaminase (1226 aa).

At Arg26 the chain carries Asymmetric dimethylarginine. The Z-binding 1 domain maps to 133–199 (LSIYQDQEQR…GTPPLWKIAV (67 aa)). Positions 133 to 202 (LSIYQDQEQR…PLWKIAVSTQ (70 aa)) are interaction with Z-DNA. 2 disordered regions span residues 208–238 (SGVVRPDGHSQGAPNSDPSLEPEDRNSTSVS) and 258–286 (GVVRPDSHSQGSPNSDPGLEPEDSNSTSA). A Phosphoserine modification is found at Ser285. The 65-residue stretch at 293 to 357 (FLDMAEIKEK…TTPPIWHLTD (65 aa)) folds into the Z-binding 2 domain. Glycyl lysine isopeptide (Lys-Gly) (interchain with G-Cter in SUMO2) cross-links involve residues Lys384 and Lys408. A Glycyl lysine isopeptide (Lys-Gly) (interchain with G-Cter in SUMO); alternate cross-link involves residue Lys418. A Glycyl lysine isopeptide (Lys-Gly) (interchain with G-Cter in SUMO1); alternate cross-link involves residue Lys418. Lys418 is covalently cross-linked (Glycyl lysine isopeptide (Lys-Gly) (interchain with G-Cter in SUMO2); alternate). Residue Ser481 is modified to Phosphoserine. The DRBM 1 domain occupies 503 to 571 (NPISGLLEYA…AMKAMTILLE (69 aa)). Residues 574 to 597 (KAKDSGKSEESSHYSTEKESEKTA) show a composition bias toward basic and acidic residues. The interval 574–610 (KAKDSGKSEESSHYSTEKESEKTAESQTPTPSATSFF) is disordered. Lys580 participates in a covalent cross-link: Glycyl lysine isopeptide (Lys-Gly) (interchain with G-Cter in SUMO2). The span at 600–610 (QTPTPSATSFF) shows a compositional bias: polar residues. Phosphothreonine occurs at positions 601 and 603. A phosphoserine mark is found at Ser614, Ser629, and Ser636. The DRBM 2 domain occupies 614–682 (SPVTTLLECM…AEEAMKALHG (69 aa)). The N-terminal extension of DRBM 3 and constituent of a bi-partite nuclear localization signal stretch occupies residues 716-725 (IGELVRYLNT). One can recognise a DRBM 3 domain in the interval 726–794 (NPVGGLLEYA…ADAALRVLIG (69 aa)). The tract at residues 795–801 (ENEKAER) is C-terminal extension of DRBM 3 and constituent of a bi-partite nuclear localization signal. Thr808 is subject to Phosphothreonine. Phosphoserine occurs at positions 814, 823, and 825. Lys875 participates in a covalent cross-link: Glycyl lysine isopeptide (Lys-Gly) (interchain with G-Cter in SUMO2). Positions 886–1221 (SLGTGNRCVK…ISKPQEEKNF (336 aa)) constitute an A to I editase domain. His910 provides a ligand contact to Zn(2+). The active-site Proton donor is Glu912. Cys966 and Cys1036 together coordinate Zn(2+).

Homodimer. Homodimerization is essential for its catalytic activity. Isoform 5 can form heterodimers with ADARB1/ADAR2. Isoform 1 interacts with ILF2/NF45 and ILF3/NF90. Binding to ILF3/NF90 up-regulates ILF3-mediated gene expression. Isoform 1 and isoform 5 (via DRBM 3 domain) interact with TNPO1. Isoform 5 (via DRBM domains) interacts with XPO5. Isoform 1 and isoform 5 can interact with EIF2AK2/PKR and UPF1. Sumoylation reduces RNA-editing activity. Ubiquitously expressed, highest levels were found in brain and lung. Isoform 5 is expressed at higher levels in astrocytomas as compared to normal brain tissue and expression increases strikingly with the severity of the tumor, being higher in the most aggressive tumors.

The protein resides in the cytoplasm. It is found in the nucleus. The protein localises to the nucleolus. It catalyses the reaction adenosine in double-stranded RNA + H2O + H(+) = inosine in double-stranded RNA + NH4(+). In terms of biological role, catalyzes the hydrolytic deamination of adenosine to inosine in double-stranded RNA (dsRNA) referred to as A-to-I RNA editing. This may affect gene expression and function in a number of ways that include mRNA translation by changing codons and hence the amino acid sequence of proteins since the translational machinery read the inosine as a guanosine; pre-mRNA splicing by altering splice site recognition sequences; RNA stability by changing sequences involved in nuclease recognition; genetic stability in the case of RNA virus genomes by changing sequences during viral RNA replication; and RNA structure-dependent activities such as microRNA production or targeting or protein-RNA interactions. Can edit both viral and cellular RNAs and can edit RNAs at multiple sites (hyper-editing) or at specific sites (site-specific editing). Its cellular RNA substrates include: bladder cancer-associated protein (BLCAP), neurotransmitter receptors for glutamate (GRIA2) and serotonin (HTR2C) and GABA receptor (GABRA3). Site-specific RNA editing of transcripts encoding these proteins results in amino acid substitutions which consequently alters their functional activities. Exhibits low-level editing at the GRIA2 Q/R site, but edits efficiently at the R/G site and HOTSPOT1. Its viral RNA substrates include: hepatitis C virus (HCV), vesicular stomatitis virus (VSV), measles virus (MV), hepatitis delta virus (HDV), and human immunodeficiency virus type 1 (HIV-1). Exhibits either a proviral (HDV, MV, VSV and HIV-1) or an antiviral effect (HCV) and this can be editing-dependent (HDV and HCV), editing-independent (VSV and MV) or both (HIV-1). Impairs HCV replication via RNA editing at multiple sites. Enhances the replication of MV, VSV and HIV-1 through an editing-independent mechanism via suppression of EIF2AK2/PKR activation and function. Stimulates both the release and infectivity of HIV-1 viral particles by an editing-dependent mechanism where it associates with viral RNAs and edits adenosines in the 5'UTR and the Rev and Tat coding sequence. Can enhance viral replication of HDV via A-to-I editing at a site designated as amber/W, thereby changing an UAG amber stop codon to an UIG tryptophan (W) codon that permits synthesis of the large delta antigen (L-HDAg) which has a key role in the assembly of viral particles. However, high levels of ADAR1 inhibit HDV replication. The chain is Double-stranded RNA-specific adenosine deaminase (ADAR) from Homo sapiens (Human).